A 318-amino-acid polypeptide reads, in one-letter code: MSEILFFSPQPLFSHMMNKNSRLHTHSNIKNTFFSEIGIGILGNSFLLLFHILKFIRGHRLRLTDLPIGLLSLIHLLMLLLMAFIATDIFISRRGWDDIICKFLVYLYRVLRGLSLCTTSMLSVLQAIILSPRSSCLAKLKHKYPHHISCAIIFLSVLYMLISSHILLSIIATPNLTRNDFLYVTQSCSILPLSYVMQSMYSTLLALREVFLISLMVLSTLYMVVLLCRHRKQAQHLQGTSLSPKASAEQRATQTILMLMTFFVLMSIFDSIVSCSRTMFLDDPTSYSIHIFVMHIYATVSPFVFMSTEKHIVNILRG.

The Extracellular portion of the chain corresponds to 1 to 32 (MSEILFFSPQPLFSHMMNKNSRLHTHSNIKNT). Residues 33 to 53 (FFSEIGIGILGNSFLLLFHIL) form a helical membrane-spanning segment. Residues 54-65 (KFIRGHRLRLTD) lie on the Cytoplasmic side of the membrane. A helical transmembrane segment spans residues 66–86 (LPIGLLSLIHLLMLLLMAFIA). Residues 87 to 109 (TDIFISRRGWDDIICKFLVYLYR) are Extracellular-facing. A disulfide bridge links cysteine 101 with cysteine 188. A helical transmembrane segment spans residues 110 to 130 (VLRGLSLCTTSMLSVLQAIIL). Residues 131–150 (SPRSSCLAKLKHKYPHHISC) are Cytoplasmic-facing. The chain crosses the membrane as a helical span at residues 151–171 (AIIFLSVLYMLISSHILLSII). Over 172 to 206 (ATPNLTRNDFLYVTQSCSILPLSYVMQSMYSTLLA) the chain is Extracellular. Asparagine 175 is a glycosylation site (N-linked (GlcNAc...) asparagine). Residues 207–227 (LREVFLISLMVLSTLYMVVLL) traverse the membrane as a helical segment. Residues 228–254 (CRHRKQAQHLQGTSLSPKASAEQRATQ) lie on the Cytoplasmic side of the membrane. Residues 255–275 (TILMLMTFFVLMSIFDSIVSC) form a helical membrane-spanning segment. Over 276 to 285 (SRTMFLDDPT) the chain is Extracellular. A helical transmembrane segment spans residues 286 to 306 (SYSIHIFVMHIYATVSPFVFM). At 307–318 (STEKHIVNILRG) the chain is on the cytoplasmic side.

Belongs to the G-protein coupled receptor 1 family. As to expression, expressed in a subset of sensory neurons located in the apical layer of the vomeronasal organ.

The protein resides in the cell membrane. Its function is as follows. Putative pheromone receptor implicated in the regulation of social and reproductive behavior. The polypeptide is Vomeronasal type-1 receptor 45 (Vmn1r45) (Mus musculus (Mouse)).